A 298-amino-acid polypeptide reads, in one-letter code: Anamorsin homolog (298 aa).

The tract at residues 1–143 (MTQLIITHQS…IKAEKPSWKP (143 aa)) is N-terminal SAM-like domain. Positions 143–162 (PEEGKVLVDDIDLEGSVPDI) are linker. The [2Fe-2S] cluster site is built by cysteine 175, cysteine 182, cysteine 185, and cysteine 187. The interval 175-187 (CKSKERACNNCNC) is fe-S binding site A. 4 residues coordinate [4Fe-4S] cluster: cysteine 218, cysteine 221, cysteine 229, and cysteine 232. Short sequence motifs (cx2C motif) lie at residues 218 to 221 (CGNC) and 229 to 232 (CSGC). A fe-S binding site B region spans residues 218-232 (CGNCYLGDAFRCSGC).

Belongs to the anamorsin family. Monomer. It depends on [2Fe-2S] cluster as a cofactor. [4Fe-4S] cluster is required as a cofactor.

It is found in the cytoplasm. Its subcellular location is the mitochondrion intermembrane space. Its function is as follows. Component of the cytosolic iron-sulfur (Fe-S) protein assembly (CIA) machinery. Required for the maturation of extramitochondrial Fe-S proteins. Part of an electron transfer chain functioning in an early step of cytosolic Fe-S biogenesis, facilitating the de novo assembly of a [4Fe-4S] cluster on the cytosolic Fe-S scaffold complex. Electrons are transferred from NADPH via a FAD- and FMN-containing diflavin oxidoreductase. Together with the diflavin oxidoreductase, also required for the assembly of the diferric tyrosyl radical cofactor of ribonucleotide reductase (RNR), probably by providing electrons for reduction during radical cofactor maturation in the catalytic small subunit. The sequence is that of Anamorsin homolog from Cryptosporidium parvum (strain Iowa II).